We begin with the raw amino-acid sequence, 450 residues long: Phosphoglucosamine mutase (450 aa).

Ser102 (phosphoserine intermediate) is an active-site residue. Ser102, Asp244, Asp246, and Asp248 together coordinate Mg(2+). Ser102 carries the phosphoserine modification.

It belongs to the phosphohexose mutase family. Requires Mg(2+) as cofactor. In terms of processing, activated by phosphorylation.

The enzyme catalyses alpha-D-glucosamine 1-phosphate = D-glucosamine 6-phosphate. Functionally, catalyzes the conversion of glucosamine-6-phosphate to glucosamine-1-phosphate. The polypeptide is Phosphoglucosamine mutase (Solidesulfovibrio magneticus (strain ATCC 700980 / DSM 13731 / RS-1) (Desulfovibrio magneticus)).